Reading from the N-terminus, the 207-residue chain is UPF0319 protein VV2327 (207 aa).

Residues 1-18 form the signal peptide; sequence MLRVLGLAGMLMSFNIHA.

Belongs to the UPF0319 family.

This Vibrio vulnificus (strain YJ016) protein is UPF0319 protein VV2327.